The sequence spans 278 residues: Large ribosomal subunit protein uL2 (278 aa).

Disordered regions lie at residues Met-1–His-53 and Val-224–Arg-278. A compositionally biased stretch (basic and acidic residues) spans Glu-23 to Leu-33. A compositionally biased stretch (polar residues) spans Arg-258 to Met-267. Residues Val-269–Arg-278 show a composition bias toward basic residues.

The protein belongs to the universal ribosomal protein uL2 family. In terms of assembly, part of the 50S ribosomal subunit. Forms a bridge to the 30S subunit in the 70S ribosome.

Its function is as follows. One of the primary rRNA binding proteins. Required for association of the 30S and 50S subunits to form the 70S ribosome, for tRNA binding and peptide bond formation. It has been suggested to have peptidyltransferase activity; this is somewhat controversial. Makes several contacts with the 16S rRNA in the 70S ribosome. In Corynebacterium aurimucosum (strain ATCC 700975 / DSM 44827 / CIP 107346 / CN-1) (Corynebacterium nigricans), this protein is Large ribosomal subunit protein uL2.